The following is a 243-amino-acid chain: Carboxy-S-adenosyl-L-methionine synthase (243 aa).

Residues Y40, 65–67, 90–91, 118–119, N133, and R200 contribute to the S-adenosyl-L-methionine site; these read GCS, DN, and DI.

This sequence belongs to the class I-like SAM-binding methyltransferase superfamily. Cx-SAM synthase family. As to quaternary structure, homodimer.

It carries out the reaction prephenate + S-adenosyl-L-methionine = carboxy-S-adenosyl-L-methionine + 3-phenylpyruvate + H2O. Functionally, catalyzes the conversion of S-adenosyl-L-methionine (SAM) to carboxy-S-adenosyl-L-methionine (Cx-SAM). This Shewanella sediminis (strain HAW-EB3) protein is Carboxy-S-adenosyl-L-methionine synthase.